We begin with the raw amino-acid sequence, 143 residues long: Small ribosomal subunit protein uS11c (143 aa).

The protein belongs to the universal ribosomal protein uS11 family. Part of the 30S ribosomal subunit.

Its subcellular location is the plastid. The protein localises to the chloroplast. The polypeptide is Small ribosomal subunit protein uS11c (Zea mays (Maize)).